The following is a 354-amino-acid chain: UDP-N-acetylglucosamine--N-acetylmuramyl-(pentapeptide) pyrophosphoryl-undecaprenol N-acetylglucosamine transferase (354 aa).

Residues 11–13 (SAG), arginine 164, serine 194, and glutamine 289 each bind UDP-N-acetyl-alpha-D-glucosamine.

The protein belongs to the glycosyltransferase 28 family. MurG subfamily.

The protein localises to the cell membrane. The enzyme catalyses di-trans,octa-cis-undecaprenyl diphospho-N-acetyl-alpha-D-muramoyl-L-alanyl-D-glutamyl-meso-2,6-diaminopimeloyl-D-alanyl-D-alanine + UDP-N-acetyl-alpha-D-glucosamine = di-trans,octa-cis-undecaprenyl diphospho-[N-acetyl-alpha-D-glucosaminyl-(1-&gt;4)]-N-acetyl-alpha-D-muramoyl-L-alanyl-D-glutamyl-meso-2,6-diaminopimeloyl-D-alanyl-D-alanine + UDP + H(+). Its pathway is cell wall biogenesis; peptidoglycan biosynthesis. Functionally, cell wall formation. Catalyzes the transfer of a GlcNAc subunit on undecaprenyl-pyrophosphoryl-MurNAc-pentapeptide (lipid intermediate I) to form undecaprenyl-pyrophosphoryl-MurNAc-(pentapeptide)GlcNAc (lipid intermediate II). The polypeptide is UDP-N-acetylglucosamine--N-acetylmuramyl-(pentapeptide) pyrophosphoryl-undecaprenol N-acetylglucosamine transferase (Shouchella clausii (strain KSM-K16) (Alkalihalobacillus clausii)).